The sequence spans 434 residues: N-lysine methyltransferase SMYD2-B (434 aa).

The SET domain occupies 8-242 (PGIEQFASPG…PGQEIYTSYI (235 aa)). 18–20 (KGR) lines the S-adenosyl-L-methionine pocket. Cys-53, Cys-56, Cys-66, Cys-69, Cys-75, Cys-79, His-87, and Cys-91 together coordinate Zn(2+). The MYND-type zinc-finger motif lies at 53–91 (CEQCFTRKKGLAKCGKCKKAFYCNANCQKKNWPMHKLEC). S-adenosyl-L-methionine contacts are provided by residues His-138, 207 to 208 (NH), and 259 to 261 (YYF).

It belongs to the class V-like SAM-binding methyltransferase superfamily.

The protein resides in the cytoplasm. The protein localises to the cytosol. Its subcellular location is the nucleus. The catalysed reaction is L-lysyl(4)-[histone H3] + 3 S-adenosyl-L-methionine = N(6),N(6),N(6)-trimethyl-L-lysyl(4)-[histone H3] + 3 S-adenosyl-L-homocysteine + 3 H(+). It carries out the reaction L-lysyl-[protein] + S-adenosyl-L-methionine = N(6)-methyl-L-lysyl-[protein] + S-adenosyl-L-homocysteine + H(+). Its function is as follows. Protein-lysine N-methyltransferase that methylates both histones and non-histone proteins, including p53/TP53 and RB1. Specifically trimethylates histone H3 'Lys-4' (H3K4me3) in vivo. The activity requires interaction with HSP90alpha. Shows even higher methyltransferase activity on p53/TP53. Monomethylates 'Lys-370' of p53/TP53, leading to decreased DNA-binding activity and subsequent transcriptional regulation activity of p53/TP53. Monomethylates RB1 at 'Lys-860'. The protein is N-lysine methyltransferase SMYD2-B (smyd2b) of Danio rerio (Zebrafish).